A 350-amino-acid chain; its full sequence is 3-methylornithine synthase (350 aa).

Residues 57–279 (NRVFLNCFIY…PKCLIPASLD (223 aa)) form the Radical SAM core domain. The [4Fe-4S] cluster site is built by Cys-71 and Cys-75. An S-adenosyl-L-methionine-binding site is contributed by Phe-77. Cys-78 is a binding site for [4Fe-4S] cluster. Asp-112, Ser-146, and Tyr-169 together coordinate (3R)-3-methyl-D-ornithine. Residues Glu-171, Arg-182, and Arg-190 each contribute to the S-adenosyl-L-methionine site. Arg-235 is a (3R)-3-methyl-D-ornithine binding site. 2 residues coordinate S-adenosyl-L-methionine: Leu-240 and Gln-242. Residues Ser-277, Thr-298, and Ser-299 each coordinate (3R)-3-methyl-D-ornithine.

It belongs to the radical SAM superfamily. PylB family. [4Fe-4S] cluster serves as cofactor. Requires S-adenosyl-L-methionine as cofactor.

It catalyses the reaction L-lysine = (3R)-3-methyl-D-ornithine. It functions in the pathway amino-acid biosynthesis; L-pyrrolysine biosynthesis. In terms of biological role, catalyzes the isomerization of L-lysine to (3R)-3-methyl-D-ornithine via a radical-based mechanism. Is required for the biosynthesis of pyrrolysine. In Methanosarcina acetivorans (strain ATCC 35395 / DSM 2834 / JCM 12185 / C2A), this protein is 3-methylornithine synthase (pylB).